The following is an 816-amino-acid chain: Sucrose synthase 2 (816 aa).

Residues methionine 280 to threonine 757 are GT-B glycosyltransferase.

Belongs to the glycosyltransferase 1 family. Plant sucrose synthase subfamily. In terms of assembly, forms homotetramers and heterotetramers with SS1, all three possible heterotetramers are formed. Abundant in developing endosperm, low in aleurone, and undetected in coleoptiles and roots. Also detected in crude extracts of anthers and in immature embryos.

It carries out the reaction an NDP-alpha-D-glucose + D-fructose = a ribonucleoside 5'-diphosphate + sucrose + H(+). Sucrose-cleaving enzyme that provides UDP-glucose and fructose for various metabolic pathways. In Hordeum vulgare (Barley), this protein is Sucrose synthase 2 (SS2).